A 482-amino-acid polypeptide reads, in one-letter code: Exodeoxyribonuclease I (482 aa).

Residues 13–194 enclose the Exonuclease domain; that stretch reads LFYDYETFGI…TSDVYATIEL (182 aa). D16, E18, and D187 together coordinate Mg(2+). E18 serves as a coordination point for substrate. In terms of domain architecture, ExoI SH3-like spans 203 to 351; that stretch reads PKLFDFFFKY…LVKNVLLKKN (149 aa). In terms of domain architecture, ExoI C-terminal spans 355 to 471; that stretch reads NSLNVDLQIY…DLLKYVFKKY (117 aa).

As to quaternary structure, monomer. Interacts with ssb (via C-terminus); this interaction stimulates the exonuclease activity by recruiting the enzyme to its substrate. Requires Mg(2+) as cofactor.

The enzyme catalyses Exonucleolytic cleavage in the 3'- to 5'-direction to yield nucleoside 5'-phosphates.. Its function is as follows. Degrades single-stranded DNA (ssDNA) in a highly processive manner. Also functions as a DNA deoxyribophosphodiesterase that releases deoxyribose-phosphate moieties following the cleavage of DNA at an apurinic/apyrimidinic (AP) site by either an AP endonuclease or AP lyase. The chain is Exodeoxyribonuclease I (sbcB) from Buchnera aphidicola subsp. Schizaphis graminum (strain Sg).